A 278-amino-acid polypeptide reads, in one-letter code: MALKTFKPTSPGRRALVLVDRSALHKGRPEKTLVEGLTKKGGRNNMGRITARRRGGGAKRLYRLVDFKRRKWDMPATVERLEYDPNRTAFIALIKYEDGEKAYILAPQRLSEGDTVIASAKCDVKPGNAMPLKAVPVGTILHNVEMKPEKGGQIARSAGAYVQLVGRDAGYAQIRLASGELRMVSDKCMATVGAVSNPDHLNINLGKAGRNRHLGKRPSVRGVVMNPVDHPHGGGEGRTSGGRHPVTPWGKPTKGAKTRKNKSTDKFIIRSRHERKKR.

Positions 222 to 278 are disordered; the sequence is GVVMNPVDHPHGGGEGRTSGGRHPVTPWGKPTKGAKTRKNKSTDKFIIRSRHERKKR. The segment covering 269–278 has biased composition (basic residues); it reads IRSRHERKKR.

The protein belongs to the universal ribosomal protein uL2 family. Part of the 50S ribosomal subunit. Forms a bridge to the 30S subunit in the 70S ribosome.

Its function is as follows. One of the primary rRNA binding proteins. Required for association of the 30S and 50S subunits to form the 70S ribosome, for tRNA binding and peptide bond formation. It has been suggested to have peptidyltransferase activity; this is somewhat controversial. Makes several contacts with the 16S rRNA in the 70S ribosome. This Maricaulis maris (strain MCS10) (Caulobacter maris) protein is Large ribosomal subunit protein uL2.